The following is an 838-amino-acid chain: Pentatricopeptide repeat-containing protein At4g19440, chloroplastic (838 aa).

A chloroplast-targeting transit peptide spans 1 to 32 (MAALLYFPKISSQMTSSHFISFSPMDLRRLSR). PPR repeat units follow at residues 238 to 268 (SKTTCNILLTSLVRANEFQKCCEAFDVVCKG), 272 to 306 (DVYLFTTAINAFCKGGKVEEAVKLFSKMEEAGVAP), 307 to 341 (NVVTFNTVIDGLGMCGRYDEAFMFKEKMVERGMEP), 342 to 376 (TLITYSILVKGLTRAKRIGDAYFVLKEMTKKGFPP), 377 to 411 (NVIVYNNLIDSFIEAGSLNKAIEIKDLMVSKGLSL), 412 to 446 (TSSTYNTLIKGYCKNGQADNAERLLKEMLSIGFNV), 447 to 481 (NQGSFTSVICLLCSHLMFDSALRFVGEMLLRNMSP), 482 to 516 (GGGLLTTLISGLCKHGKHSKALELWFQFLNKGFVV), 517 to 551 (DTRTSNALLHGLCEAGKLDEAFRIQKEILGRGCVM), 552 to 586 (DRVSYNTLISGCCGKKKLDEAFMFLDEMVKRGLKP), 587 to 621 (DNYTYSILICGLFNMNKVEEAIQFWDDCKRNGMLP), 622 to 656 (DVYTYSVMIDGCCKAERTEEGQEFFDEMMSKNVQP), 657 to 691 (NTVVYNHLIRAYCRSGRLSMALELREDMKHKGISP), 692 to 726 (NSATYTSLIKGMSIISRVEEAKLLFEEMRMEGLEP), 727 to 761 (NVFHYTALIDGYGKLGQMVKVECLLREMHSKNVHP), and 762 to 796 (NKITYTVMIGGYARDGNVTEASRLLNEMREKGIVP).

This sequence belongs to the PPR family. P subfamily.

It localises to the plastid. It is found in the chloroplast. This Arabidopsis thaliana (Mouse-ear cress) protein is Pentatricopeptide repeat-containing protein At4g19440, chloroplastic.